We begin with the raw amino-acid sequence, 400 residues long: Aspartate/prephenate aminotransferase (400 aa).

Residues Gly39, Trp125, and Asn175 each coordinate L-aspartate. An N6-(pyridoxal phosphate)lysine modification is found at Lys239. An L-aspartate-binding site is contributed by Arg375.

This sequence belongs to the class-I pyridoxal-phosphate-dependent aminotransferase family. As to quaternary structure, homodimer. It depends on pyridoxal 5'-phosphate as a cofactor.

It localises to the cytoplasm. It catalyses the reaction L-aspartate + 2-oxoglutarate = oxaloacetate + L-glutamate. The enzyme catalyses L-arogenate + 2-oxoglutarate = prephenate + L-glutamate. In terms of biological role, catalyzes the reversible conversion of aspartate and 2-oxoglutarate to glutamate and oxaloacetate. Can also transaminate prephenate in the presence of glutamate. Required for symbiotic nitrogen fixation. The polypeptide is Aspartate/prephenate aminotransferase (Rhizobium meliloti (strain 1021) (Ensifer meliloti)).